The primary structure comprises 265 residues: NAD kinase 2 (265 aa).

The Proton acceptor role is filled by Asn51. NAD(+) is bound by residues 122–123, Arg149, Asp151, 162–167, Ala186, and Asn226; these read NE and TAYNKS.

It belongs to the NAD kinase family. It depends on a divalent metal cation as a cofactor.

It localises to the cytoplasm. It catalyses the reaction NAD(+) + ATP = ADP + NADP(+) + H(+). Functionally, involved in the regulation of the intracellular balance of NAD and NADP, and is a key enzyme in the biosynthesis of NADP. Catalyzes specifically the phosphorylation on 2'-hydroxyl of the adenosine moiety of NAD to yield NADP. In Halalkalibacterium halodurans (strain ATCC BAA-125 / DSM 18197 / FERM 7344 / JCM 9153 / C-125) (Bacillus halodurans), this protein is NAD kinase 2.